A 173-amino-acid polypeptide reads, in one-letter code: Crossover junction endodeoxyribonuclease RuvC (173 aa).

Active-site residues include Asp8, Glu67, and Asp139. Residues Asp8, Glu67, and Asp139 each contribute to the Mg(2+) site.

The protein belongs to the RuvC family. Homodimer which binds Holliday junction (HJ) DNA. The HJ becomes 2-fold symmetrical on binding to RuvC with unstacked arms; it has a different conformation from HJ DNA in complex with RuvA. In the full resolvosome a probable DNA-RuvA(4)-RuvB(12)-RuvC(2) complex forms which resolves the HJ. Mg(2+) is required as a cofactor.

Its subcellular location is the cytoplasm. The enzyme catalyses Endonucleolytic cleavage at a junction such as a reciprocal single-stranded crossover between two homologous DNA duplexes (Holliday junction).. Functionally, the RuvA-RuvB-RuvC complex processes Holliday junction (HJ) DNA during genetic recombination and DNA repair. Endonuclease that resolves HJ intermediates. Cleaves cruciform DNA by making single-stranded nicks across the HJ at symmetrical positions within the homologous arms, yielding a 5'-phosphate and a 3'-hydroxyl group; requires a central core of homology in the junction. The consensus cleavage sequence is 5'-(A/T)TT(C/G)-3'. Cleavage occurs on the 3'-side of the TT dinucleotide at the point of strand exchange. HJ branch migration catalyzed by RuvA-RuvB allows RuvC to scan DNA until it finds its consensus sequence, where it cleaves and resolves the cruciform DNA. The sequence is that of Crossover junction endodeoxyribonuclease RuvC from Baumannia cicadellinicola subsp. Homalodisca coagulata.